Reading from the N-terminus, the 325-residue chain is Glutarate 2-hydroxylase (325 aa).

Histidine 160, aspartate 162, and histidine 292 together coordinate Fe cation.

Belongs to the glutarate hydroxylase family. In terms of assembly, homotetramer. Fe(2+) is required as a cofactor.

The enzyme catalyses glutarate + 2-oxoglutarate + O2 = (S)-2-hydroxyglutarate + succinate + CO2. Its pathway is amino-acid degradation. Acts as an alpha-ketoglutarate-dependent dioxygenase catalyzing hydroxylation of glutarate (GA) to L-2-hydroxyglutarate (L2HG). Functions in a L-lysine degradation pathway that proceeds via cadaverine, glutarate and L-2-hydroxyglutarate. The polypeptide is Glutarate 2-hydroxylase (Escherichia coli (strain 55989 / EAEC)).